The following is a 185-amino-acid chain: Small ribosomal subunit protein uS4 (185 aa).

In terms of domain architecture, S4 RNA-binding spans 107 to 179 (RRLQTLVYRK…NGRRKRKNNH (73 aa)). Positions 161-185 (NTPLTNPEINGRRKRKNNHAGKEDN) are disordered.

The protein belongs to the universal ribosomal protein uS4 family.

This Entamoeba histolytica (strain ATCC 30459 / HM-1:IMSS / ABRM) protein is Small ribosomal subunit protein uS4.